Consider the following 887-residue polypeptide: Alanine--tRNA ligase (887 aa).

Zn(2+)-binding residues include His-565, His-569, Cys-674, and His-678.

The protein belongs to the class-II aminoacyl-tRNA synthetase family. Zn(2+) serves as cofactor.

It is found in the cytoplasm. It catalyses the reaction tRNA(Ala) + L-alanine + ATP = L-alanyl-tRNA(Ala) + AMP + diphosphate. Functionally, catalyzes the attachment of alanine to tRNA(Ala) in a two-step reaction: alanine is first activated by ATP to form Ala-AMP and then transferred to the acceptor end of tRNA(Ala). Also edits incorrectly charged Ser-tRNA(Ala) and Gly-tRNA(Ala) via its editing domain. The protein is Alanine--tRNA ligase of Erythrobacter litoralis (strain HTCC2594).